A 183-amino-acid chain; its full sequence is Mitochondrial inner membrane protease subunit 2 (183 aa).

Residues 13–35 (AFVSGFFVAVPVTVTVLDRLAYV) traverse the membrane as a helical segment. Active-site residues include Ser42 and Lys90. Residues 161-183 (SVPPDRRPLLNWDRAAEDKYDDD) are disordered. The segment covering 164–183 (PDRRPLLNWDRAAEDKYDDD) has biased composition (basic and acidic residues).

Belongs to the peptidase S26 family. IMP2 subfamily. Heterodimer of 2 subunits, IMMPL1 and IMMPL2.

It is found in the mitochondrion inner membrane. Functionally, catalyzes the removal of transit peptides required for the targeting of proteins from the mitochondrial matrix, across the inner membrane, into the inter-membrane space. This is Mitochondrial inner membrane protease subunit 2 (immp2l) from Danio rerio (Zebrafish).